The following is a 415-amino-acid chain: MIDKKLLLQDFEMVALSLKKRNHAMDDGLERLREVITHYKKQLIELEGLQAFQNKVSKEFGIKMAQKADTSDLKKELESNKIKLNELSKSVSELEQQIDLKLSIIPNLVDEKTPLGANEEDNIEIKKILTPRVFNFKPKEHFELAQQNGWIDFESGVKLAKSRFSVIRGFGAKIYRALIYLMLDFNEKNGFEIIYTPALVNEKMLFGTGQLPKFKEDVFKIENENLYLIPTAEVTLTNLYNDTIISVENLPIKMTAHTPCFRSEAGSAGKDTRGMIRQHQFDKVELVAITHPKESDAMQECMLESASEILRALELPHRFVQLCSGDLGFSASNTIDIEVWLPGQNCYREISSVSNTRDFQARRAKIRFKENQKNQLAHTLNGSSLAVGRTMVALMENHQQADGSIHIPKALEKYL.

An L-serine-binding site is contributed by 231–233; it reads TAE. 262–264 contacts ATP; it reads RSE. An L-serine-binding site is contributed by Glu285. Residue 349–352 coordinates ATP; that stretch reads EISS. Ser383 contacts L-serine.

Belongs to the class-II aminoacyl-tRNA synthetase family. Type-1 seryl-tRNA synthetase subfamily. Homodimer. The tRNA molecule binds across the dimer.

The protein localises to the cytoplasm. It carries out the reaction tRNA(Ser) + L-serine + ATP = L-seryl-tRNA(Ser) + AMP + diphosphate + H(+). The enzyme catalyses tRNA(Sec) + L-serine + ATP = L-seryl-tRNA(Sec) + AMP + diphosphate + H(+). The protein operates within aminoacyl-tRNA biosynthesis; selenocysteinyl-tRNA(Sec) biosynthesis; L-seryl-tRNA(Sec) from L-serine and tRNA(Sec): step 1/1. Catalyzes the attachment of serine to tRNA(Ser). Is also able to aminoacylate tRNA(Sec) with serine, to form the misacylated tRNA L-seryl-tRNA(Sec), which will be further converted into selenocysteinyl-tRNA(Sec). The chain is Serine--tRNA ligase from Helicobacter pylori (strain P12).